Reading from the N-terminus, the 93-residue chain is Acylphosphatase (93 aa).

Positions 6–92 (RAHVWVGGKV…EGLTHFEVLR (87 aa)) constitute an Acylphosphatase-like domain. Residues Arg-21 and Asn-39 contribute to the active site.

Belongs to the acylphosphatase family.

The enzyme catalyses an acyl phosphate + H2O = a carboxylate + phosphate + H(+). The chain is Acylphosphatase (acyP) from Gloeobacter violaceus (strain ATCC 29082 / PCC 7421).